Here is a 780-residue protein sequence, read N- to C-terminus: Pendrin (780 aa).

Residues Met-1 to Asp-87 lie on the Cytoplasmic side of the membrane. Residues Ile-88–Leu-108 form a helical membrane-spanning segment. Ala-109 is a topological domain (extracellular). The chain crosses the membrane as a helical span at residues Ala-110–Phe-130. Over Gly-131–His-135 the chain is Cytoplasmic. Residues Ile-136 to Ala-156 form a helical membrane-spanning segment. Residues Pro-157–Thr-191 lie on the Extracellular side of the membrane. Residues Leu-192–Val-212 traverse the membrane as a helical segment. Topologically, residues Arg-213 to Pro-218 are cytoplasmic. The helical transmembrane segment at Leu-219–Val-239 threads the bilayer. Residues Leu-240 to Asn-263 lie on the Extracellular side of the membrane. The helical transmembrane segment at Ile-264–Ala-284 threads the bilayer. Topologically, residues Val-285–Arg-295 are cytoplasmic. A helical transmembrane segment spans residues Ile-296–Gly-316. The Extracellular portion of the chain corresponds to Ala-317 to Gly-344. The helical transmembrane segment at Leu-345–Val-365 threads the bilayer. Topologically, residues Ser-366–Glu-384 are cytoplasmic. The chain crosses the membrane as a helical span at residues Phe-385–Thr-405. At Ala-406–Gln-421 the chain is on the extracellular side. The helical transmembrane segment at Val-422–Leu-442 threads the bilayer. Topologically, residues Glu-443 to Ser-448 are cytoplasmic. A helical transmembrane segment spans residues Val-449–Pro-469. Residues Arg-470–Cys-486 lie on the Extracellular side of the membrane. A helical membrane pass occupies residues Ile-487 to Leu-507. The Cytoplasmic portion of the chain corresponds to Thr-508 to Ser-780. Residues His-535–Leu-729 enclose the STAS domain.

Belongs to the SLC26A/SulP transporter (TC 2.A.53) family. As to quaternary structure, interacts with IQGAP1. This interaction enhances the chloride-bicarbonate exchange activity of SLC26A4. As to expression, highly expressed in the kidney (at protein level). Throughout the endolymphatic duct and sac, in distinct areas of the utricle and saccule, and in the external sulcus region within the cochlea. Expressed in the parotid gland.

The protein localises to the apical cell membrane. The protein resides in the cell membrane. The enzyme catalyses chloride(in) = chloride(out). It carries out the reaction iodide(out) = iodide(in). It catalyses the reaction hydrogencarbonate(in) + chloride(out) = hydrogencarbonate(out) + chloride(in). The catalysed reaction is iodide(in) + hydrogencarbonate(out) = iodide(out) + hydrogencarbonate(in). The enzyme catalyses iodide(in) + chloride(out) = iodide(out) + chloride(in). It carries out the reaction formate(in) + chloride(out) = formate(out) + chloride(in). Its function is as follows. Sodium-independent transporter of chloride and iodide. Mediates electroneutral iodide-chloride, iodide-bicarbonate and chloride-bicarbonate exchange with 1:1 stoichiometry. Mediates elctroneutral chloride-formate exchange. This Mus musculus (Mouse) protein is Pendrin (Slc26a4).